The primary structure comprises 125 residues: uncharacterized protein (125 aa).

Residues 21-43 form a helical membrane-spanning segment; the sequence is KFSLIALVSFTALAIIVLYHNIS.

It is found in the membrane. This is an uncharacterized protein from Archaeoglobus fulgidus (strain ATCC 49558 / DSM 4304 / JCM 9628 / NBRC 100126 / VC-16).